Reading from the N-terminus, the 288-residue chain is Energy-coupling factor transporter ATP-binding protein EcfA2 (288 aa).

The region spanning 3–245 (IIVKNLTHIY…NASKLKDIGL (243 aa)) is the ABC transporter domain. 40–47 (GHTGSGKS) serves as a coordination point for ATP.

The protein belongs to the ABC transporter superfamily. Energy-coupling factor EcfA family. In terms of assembly, forms a stable energy-coupling factor (ECF) transporter complex composed of 2 membrane-embedded substrate-binding proteins (S component), 2 ATP-binding proteins (A component) and 2 transmembrane proteins (T component).

The protein resides in the cell membrane. In terms of biological role, ATP-binding (A) component of a common energy-coupling factor (ECF) ABC-transporter complex. Unlike classic ABC transporters this ECF transporter provides the energy necessary to transport a number of different substrates. This Clostridioides difficile (strain 630) (Peptoclostridium difficile) protein is Energy-coupling factor transporter ATP-binding protein EcfA2.